A 388-amino-acid chain; its full sequence is Succinate--CoA ligase [ADP-forming] subunit beta (388 aa).

Positions 9 to 244 (KEIFARYGLP…PTQESELEVK (236 aa)) constitute an ATP-grasp domain. Residues K46, 53–55 (GRG), E99, T102, and E107 contribute to the ATP site. N199 and D213 together coordinate Mg(2+). Substrate-binding positions include N264 and 321–323 (GIL).

This sequence belongs to the succinate/malate CoA ligase beta subunit family. In terms of assembly, heterotetramer of two alpha and two beta subunits. Mg(2+) is required as a cofactor.

It carries out the reaction succinate + ATP + CoA = succinyl-CoA + ADP + phosphate. The catalysed reaction is GTP + succinate + CoA = succinyl-CoA + GDP + phosphate. Its pathway is carbohydrate metabolism; tricarboxylic acid cycle; succinate from succinyl-CoA (ligase route): step 1/1. Functionally, succinyl-CoA synthetase functions in the citric acid cycle (TCA), coupling the hydrolysis of succinyl-CoA to the synthesis of either ATP or GTP and thus represents the only step of substrate-level phosphorylation in the TCA. The beta subunit provides nucleotide specificity of the enzyme and binds the substrate succinate, while the binding sites for coenzyme A and phosphate are found in the alpha subunit. This is Succinate--CoA ligase [ADP-forming] subunit beta from Persephonella marina (strain DSM 14350 / EX-H1).